Reading from the N-terminus, the 476-residue chain is Ribulose bisphosphate carboxylase large chain (476 aa).

A propeptide spanning residues 1-2 (MS) is cleaved from the precursor. Residue P3 is modified to N-acetylproline. Residue K14 is modified to N6,N6,N6-trimethyllysine. The substrate site is built by N123 and T173. The Proton acceptor role is filled by K175. A substrate-binding site is contributed by K177. Mg(2+) contacts are provided by K201, D203, and E204. K201 carries the N6-carboxylysine modification. The active-site Proton acceptor is the H294. Substrate contacts are provided by R295, H327, and S379.

This sequence belongs to the RuBisCO large chain family. Type I subfamily. Heterohexadecamer of 8 large chains and 8 small chains; disulfide-linked. The disulfide link is formed within the large subunit homodimers. Requires Mg(2+) as cofactor. The disulfide bond which can form in the large chain dimeric partners within the hexadecamer appears to be associated with oxidative stress and protein turnover.

Its subcellular location is the plastid. It is found in the chloroplast. The catalysed reaction is 2 (2R)-3-phosphoglycerate + 2 H(+) = D-ribulose 1,5-bisphosphate + CO2 + H2O. The enzyme catalyses D-ribulose 1,5-bisphosphate + O2 = 2-phosphoglycolate + (2R)-3-phosphoglycerate + 2 H(+). Its function is as follows. RuBisCO catalyzes two reactions: the carboxylation of D-ribulose 1,5-bisphosphate, the primary event in carbon dioxide fixation, as well as the oxidative fragmentation of the pentose substrate in the photorespiration process. Both reactions occur simultaneously and in competition at the same active site. The sequence is that of Ribulose bisphosphate carboxylase large chain from Sorghum bicolor (Sorghum).